Here is a 180-residue protein sequence, read N- to C-terminus: ATP synthase subunit b, chloroplastic (180 aa).

A helical membrane pass occupies residues V28–F48.

This sequence belongs to the ATPase B chain family. As to quaternary structure, F-type ATPases have 2 components, F(1) - the catalytic core - and F(0) - the membrane proton channel. F(1) has five subunits: alpha(3), beta(3), gamma(1), delta(1), epsilon(1). F(0) has four main subunits: a(1), b(1), b'(1) and c(10-14). The alpha and beta chains form an alternating ring which encloses part of the gamma chain. F(1) is attached to F(0) by a central stalk formed by the gamma and epsilon chains, while a peripheral stalk is formed by the delta, b and b' chains.

The protein localises to the plastid. Its subcellular location is the chloroplast thylakoid membrane. Functionally, f(1)F(0) ATP synthase produces ATP from ADP in the presence of a proton or sodium gradient. F-type ATPases consist of two structural domains, F(1) containing the extramembraneous catalytic core and F(0) containing the membrane proton channel, linked together by a central stalk and a peripheral stalk. During catalysis, ATP synthesis in the catalytic domain of F(1) is coupled via a rotary mechanism of the central stalk subunits to proton translocation. Its function is as follows. Component of the F(0) channel, it forms part of the peripheral stalk, linking F(1) to F(0). The sequence is that of ATP synthase subunit b, chloroplastic from Cuscuta obtusiflora (Peruvian dodder).